Here is a 1060-residue protein sequence, read N- to C-terminus: RNA-binding protein 27 (1060 aa).

Basic and acidic residues-rich tracts occupy residues 91–102 (LVQEKEEIKEEV) and 124–143 (TRSE…DGKW). 2 disordered regions span residues 91-143 (LVQE…DGKW) and 162-235 (WRRG…GAQS). A compositionally biased stretch (basic residues) spans 165–185 (GRSKSRSKSRGLSRSRSRSRG). The span at 186–211 (RSKDRDPNRNVEHRERSKFKSERNDL) shows a compositional bias: basic and acidic residues. A compositionally biased stretch (polar residues) spans 225 to 235 (SSEQYSSGAQS). A C3H1-type zinc finger spans residues 273–301 (LPPKRRCRDYDERGFCVLGDLCQFDHGND). Pro residues-rich tracts occupy residues 319–356 (PPPG…PGPG) and 371–384 (QPPP…PRPP). The tract at residues 319-412 (PPPGLPPPPP…PNLASVGTRL (94 aa)) is disordered. Polar residues predominate over residues 386 to 402 (TQSSLINSRDQPGTSAV). The residue at position 447 (Thr447) is a Phosphothreonine. Arg455 carries the post-translational modification Omega-N-methylarginine. Residues 565–592 (MSGLEGPLTKKPWLGKQGNNNQNKPGFL) are disordered. A compositionally biased stretch (low complexity) spans 579-588 (GKQGNNNQNK). Residues 600 to 674 (TKLEVKKIPQ…RFIRVLWHRE (75 aa)) form the RRM domain. The stretch at 809–886 (VQEVLKKKQE…KDELKTSSAV (78 aa)) forms a coiled coil. Ser927 carries the phosphoserine modification. Disordered regions lie at residues 940–968 (PVGR…SLNH) and 1006–1060 (DRRL…SWRR). Phosphoserine occurs at positions 1012 and 1020. Residues 1024 to 1053 (ETEEEEVKEEETETSDLFLPDDDDEDEDEY) show a composition bias toward acidic residues.

The protein localises to the cytoplasm. It is found in the nucleus speckle. Its function is as follows. May be involved in the turnover of nuclear polyadenylated (pA+) RNA. This is RNA-binding protein 27 from Homo sapiens (Human).